A 343-amino-acid polypeptide reads, in one-letter code: Methionine import ATP-binding protein MetN 2 (343 aa).

One can recognise an ABC transporter domain in the interval 2–241 (IEFKDVTKTF…PQQAVTKRFV (240 aa)). Position 38-45 (38-45 (GYSGAGKS)) interacts with ATP.

It belongs to the ABC transporter superfamily. Methionine importer (TC 3.A.1.24) family. As to quaternary structure, the complex is composed of two ATP-binding proteins (MetN), two transmembrane proteins (MetI) and a solute-binding protein (MetQ).

The protein resides in the cell membrane. The catalysed reaction is L-methionine(out) + ATP + H2O = L-methionine(in) + ADP + phosphate + H(+). The enzyme catalyses D-methionine(out) + ATP + H2O = D-methionine(in) + ADP + phosphate + H(+). Functionally, part of the ABC transporter complex MetNIQ involved in methionine import. Responsible for energy coupling to the transport system. The polypeptide is Methionine import ATP-binding protein MetN 2 (Lactiplantibacillus plantarum (strain ATCC BAA-793 / NCIMB 8826 / WCFS1) (Lactobacillus plantarum)).